The primary structure comprises 308 residues: Olfactory receptor 6F1 (308 aa).

At 1 to 25 (MDTGNKTLPQDFLLLGFPGSQTLQL) the chain is on the extracellular side. N-linked (GlcNAc...) asparagine glycosylation is present at Asn-5. The chain crosses the membrane as a helical span at residues 26-46 (SLFMLFLVMYILTVSGNVAIL). Residues 47–54 (MLVSTSHQ) lie on the Cytoplasmic side of the membrane. Residues 55–75 (LHTPMYFFLSNLSFLEIWYTT) traverse the membrane as a helical segment. Residues 76-99 (AAVPKALAILLGRSQTISFTSCLL) lie on the Extracellular side of the membrane. Cysteines 97 and 189 form a disulfide. A helical membrane pass occupies residues 100–120 (QMYFVFSLGCTEYFLLAAMAY). The Cytoplasmic segment spans residues 121–139 (DRCLAICYPLHYGAIMSSL). Residues 140–160 (LSAQLALGSWVCGFVAIAVPT) traverse the membrane as a helical segment. At 161-197 (ALISGLSFCGPRAINHFFCDIAPWIALACTNTQAVEL) the chain is on the extracellular side. The helical transmembrane segment at 198–217 (VAFVIAVVVILSSCLITFVS) threads the bilayer. The Cytoplasmic segment spans residues 218–237 (YVYIISTILRIPSASGRSKA). A helical membrane pass occupies residues 238 to 258 (FSTCSSHLTVVLIWYGSTVFL). Residues 259-271 (HVRTSIKDALDLI) lie on the Extracellular side of the membrane. Residues 272–292 (KAVHVLNTVVTPVLNPFIYTL) traverse the membrane as a helical segment. The Cytoplasmic segment spans residues 293-308 (RNKEVRETLLKKWKGK).

Belongs to the G-protein coupled receptor 1 family.

The protein localises to the cell membrane. Functionally, odorant receptor. The polypeptide is Olfactory receptor 6F1 (OR6F1) (Homo sapiens (Human)).